The sequence spans 42 residues: F420-non-reducing hydrogenase vhu subunit U (42 aa).

The Ni(2+) site is built by U21 and C24. U21 is a non-standard amino acid (selenocysteine). A propeptide spans 28-42 (removed in mature form); the sequence is VLDRVKFRIERKDED.

Belongs to the [NiFe]/[NiFeSe] hydrogenase large subunit family. As to quaternary structure, the F420-non-reducing hydrogenase vhu is composed of four subunits; VhuA, VhuD, VhuG and VhuU. Requires Ni(2+) as cofactor.

The chain is F420-non-reducing hydrogenase vhu subunit U (vhuU) from Methanopyrus kandleri (strain AV19 / DSM 6324 / JCM 9639 / NBRC 100938).